The primary structure comprises 330 residues: Polyprenol dehydrogenase (330 aa).

Residues isoleucine 55, tyrosine 208, lysine 212, and threonine 245 each coordinate NAD(+). Tyrosine 208 serves as the catalytic Proton acceptor.

Belongs to the short-chain dehydrogenases/reductases (SDR) family. In terms of tissue distribution, widely expressed. Highly expressed in the pancreas.

The protein resides in the lipid droplet. It localises to the secreted. It catalyses the reaction a di-trans,poly-cis-polyprenol + NAD(+) = a di-trans,poly-cis-polyprenal + NADH + H(+). The catalysed reaction is a di-trans,poly-cis-polyprenol + NADP(+) = a di-trans,poly-cis-polyprenal + NADPH + H(+). It carries out the reaction a di-trans,poly-cis-dolichol + NADP(+) = a di-trans,poly-cis-dolichal + NADPH + H(+). The enzyme catalyses a di-trans,poly-cis-dolichol + NAD(+) = a di-trans,poly-cis-dolichal + NADH + H(+). It participates in protein modification; protein glycosylation. In terms of biological role, oxidoreductase that plays a key role in early steps of protein N-linked glycosylation by mediating two non-consecutive steps in dolichol biosynthesis. Acts both as a NAD(+)-dependent dehydrogenase and as a NADPH-dependent reductase during the conversion of polyprenol into dolichol. First catalyzes the NAD(+)-dependent dehydrogenation of polyprenol into polyprenal; polyprenal is then reduced into dolichal by SRD5A3. It then catalyzes the NADPH-dependent reduction of dolichal into dolichol. May also acts as a positive regulator of starvation-induced autophagy. The polypeptide is Polyprenol dehydrogenase (Homo sapiens (Human)).